A 206-amino-acid chain; its full sequence is Large ribosomal subunit protein bL25 (206 aa).

Residues 184–206 form a disordered region; that stretch reads AEEAAAEVAEPEVIKKGKEEEEE. The segment covering 195-206 has biased composition (basic and acidic residues); it reads EVIKKGKEEEEE.

This sequence belongs to the bacterial ribosomal protein bL25 family. CTC subfamily. In terms of assembly, part of the 50S ribosomal subunit; part of the 5S rRNA/L5/L18/L25 subcomplex. Contacts the 5S rRNA. Binds to the 5S rRNA independently of L5 and L18.

This is one of the proteins that binds to the 5S RNA in the ribosome where it forms part of the central protuberance. This Thermus thermophilus (strain ATCC BAA-163 / DSM 7039 / HB27) protein is Large ribosomal subunit protein bL25.